Consider the following 296-residue polypeptide: Protoheme IX farnesyltransferase (296 aa).

A run of 8 helical transmembrane segments spans residues 8-28 (VTKPGIIMGNLISVAGGFFLA), 35-55 (WILMLATVIGLSLVVASGCAI), 84-104 (AAFFHGIVLGVIGFALLSYFT), 107-127 (VAVAFAAFGYVVYVGLYTMYF), 132-152 (VYGTFVGSLSGAVPPVVGYCA), 162-182 (AILLTMFCIWQMPHSYAIAIF), 215-235 (FAVVAALLPLTGYVGIGFMVV), and 264-284 (VFFFSIITVTALSVTMALDFN).

The protein belongs to the UbiA prenyltransferase family. Protoheme IX farnesyltransferase subfamily.

It localises to the cell inner membrane. The enzyme catalyses heme b + (2E,6E)-farnesyl diphosphate + H2O = Fe(II)-heme o + diphosphate. It functions in the pathway porphyrin-containing compound metabolism; heme O biosynthesis; heme O from protoheme: step 1/1. In terms of biological role, converts heme B (protoheme IX) to heme O by substitution of the vinyl group on carbon 2 of heme B porphyrin ring with a hydroxyethyl farnesyl side group. This is Protoheme IX farnesyltransferase from Marinomonas sp. (strain MWYL1).